The following is a 503-amino-acid chain: MGCWGRNRGRLLCMLLLTFMFMVLEVVVSRVTASLAMLSDSFHMLSDVLALVVALVAERFARRTHATQKNTFGWIRAEVMGALVNAIFLTGLCFAILLEAVERFIEPHEMQQPLVVLSVGVAGLLVNVLGLCLFHHHSGEGQGAGHGHSHGHGHGHLAKGARKAGRAGVEAGAPPGRAPDQEETNTLVANTSNSNGLKADQAEPEKLRSDDPVDVQVNGNLIQESDNLEAEDNRAGQLNMRGVFLHVLGDALGSVIVVVNALVFYFNWKGCTEDDFCTNPCFPDPCKSSVEIINSTQAPMRDAGPCWVLYLDPTLCIIMVCILLYTTYPLLKESALILLQTVPKQIDIKHLVKELRDVDGVEEVHELHVWQLAGSRIIATAHIKCEDPASYMQVAKTIKDVFHNHGIHATTIQPEFASVGSKSSVLPCELACRTQCALKQCCGTRPQVHSGKDAEKAPTVSISCLELSENLEKKARRTKAEGSLPAVVIEIKNVPNKQPESSL.

The Cytoplasmic segment spans residues 1 to 10 (MGCWGRNRGR). Residues 11-31 (LLCMLLLTFMFMVLEVVVSRV) form a helical membrane-spanning segment. At 32-35 (TASL) the chain is on the extracellular side. A helical transmembrane segment spans residues 36-56 (AMLSDSFHMLSDVLALVVALV). Zn(2+) contacts are provided by histidine 43 and aspartate 47. Topologically, residues 57–78 (AERFARRTHATQKNTFGWIRAE) are cytoplasmic. The helical transmembrane segment at 79 to 99 (VMGALVNAIFLTGLCFAILLE) threads the bilayer. Residues 100-113 (AVERFIEPHEMQQP) lie on the Extracellular side of the membrane. The helical transmembrane segment at 114-134 (LVVLSVGVAGLLVNVLGLCLF) threads the bilayer. Topologically, residues 135–243 (HHHSGEGQGA…RAGQLNMRGV (109 aa)) are cytoplasmic. Residues 140–213 (EGQGAGHGHS…PEKLRSDDPV (74 aa)) form a disordered region. A 6 X 2 AA approximate repeats of H-G region spans residues 145-156 (GHGHSHGHGHGH). Positions 147–165 (GHSHGHGHGHLAKGARKAG) are enriched in basic residues. The span at 184–196 (TNTLVANTSNSNG) shows a compositional bias: polar residues. Residues 200–211 (DQAEPEKLRSDD) show a composition bias toward basic and acidic residues. Residues 244 to 264 (FLHVLGDALGSVIVVVNALVF) traverse the membrane as a helical segment. Positions 246 and 250 each coordinate Zn(2+). Residues 265-303 (YFNWKGCTEDDFCTNPCFPDPCKSSVEIINSTQAPMRDA) lie on the Extracellular side of the membrane. N-linked (GlcNAc...) asparagine glycosylation occurs at asparagine 294. The helical transmembrane segment at 304–324 (GPCWVLYLDPTLCIIMVCILL) threads the bilayer. At 325–503 (YTTYPLLKES…VPNKQPESSL (179 aa)) the chain is on the cytoplasmic side. Phosphoserine is present on serine 502.

This sequence belongs to the cation diffusion facilitator (CDF) transporter (TC 2.A.4) family. SLC30A subfamily. In terms of assembly, homodimer. Interacts with TMEM163. Interacts and forms a complex with TMC6 and TMC8; the interaction regulates zinc transport into the ER. In terms of tissue distribution, widely expressed.

It localises to the cell membrane. It is found in the basolateral cell membrane. The protein localises to the cytoplasmic vesicle membrane. Its subcellular location is the cytoplasm. The protein resides in the endoplasmic reticulum membrane. It localises to the golgi apparatus membrane. It is found in the nucleus membrane. It catalyses the reaction Zn(2+)(in) + 2 H(+)(out) = Zn(2+)(out) + 2 H(+)(in). Functionally, zinc ion:proton antiporter that could function at the plasma membrane mediating zinc efflux from cells against its electrochemical gradient protecting them from intracellular zinc accumulation and toxicity. Alternatively, could prevent the transport to the plasma membrane of CACNB2, the L-type calcium channels regulatory subunit, through a yet to be defined mechanism. By modulating the expression of these channels at the plasma membrane, could prevent calcium and zinc influx into cells. By the same mechanism, could also prevent L-type calcium channels-mediated heavy metal influx into cells. In some cells, could also function as a zinc ion:proton antiporter mediating zinc entry into the lumen of cytoplasmic vesicles. In macrophages, can increase zinc ions concentration into the lumen of cytoplasmic vesicles containing engulfed bacteria and could help inactivate them. Forms a complex with TMC6/EVER1 and TMC8/EVER2 at the ER membrane of keratynocytes which facilitates zinc uptake into the ER. Down-regulates the activity of transcription factors induced by zinc and cytokines. The polypeptide is Proton-coupled zinc antiporter SLC30A1 (Mus musculus (Mouse)).